Here is a 306-residue protein sequence, read N- to C-terminus: tRNA pseudouridine synthase B (306 aa).

The Nucleophile role is filled by D47.

The protein belongs to the pseudouridine synthase TruB family. Type 1 subfamily.

The catalysed reaction is uridine(55) in tRNA = pseudouridine(55) in tRNA. Its function is as follows. Responsible for synthesis of pseudouridine from uracil-55 in the psi GC loop of transfer RNAs. This Neisseria meningitidis serogroup A / serotype 4A (strain DSM 15465 / Z2491) protein is tRNA pseudouridine synthase B.